The following is a 158-amino-acid chain: Transcription elongation factor GreA (158 aa).

Residues 4–75 (EKTYPMTQEG…TQLENMIRNA (72 aa)) adopt a coiled-coil conformation.

This sequence belongs to the GreA/GreB family.

In terms of biological role, necessary for efficient RNA polymerase transcription elongation past template-encoded arresting sites. The arresting sites in DNA have the property of trapping a certain fraction of elongating RNA polymerases that pass through, resulting in locked ternary complexes. Cleavage of the nascent transcript by cleavage factors such as GreA or GreB allows the resumption of elongation from the new 3'terminus. GreA releases sequences of 2 to 3 nucleotides. The protein is Transcription elongation factor GreA of Bacillus anthracis (strain A0248).